A 161-amino-acid chain; its full sequence is MKFFAVLALCIVGAIASPLTADEASLVQSSWKAVSHNEVEILAAVFAAYPDIQNKFSQFAGKDLASIKDTGAFATHATRIVSFLSEVIALSGNESNASAVNSLVSKLGDDHKARGVSAAQFGEFRTALVAYLQANVSWGDNVAAAWNKALDNTFAIVVPRL.

The N-terminal stretch at 1 to 16 (MKFFAVLALCIVGAIA) is a signal peptide. In terms of domain architecture, Globin spans 18–161 (PLTADEASLV…NTFAIVVPRL (144 aa)). Heme b-binding residues include His76 and His111.

It belongs to the globin family. Homodimer.

The chain is Globin CTT-VIIB-10 (CTT-7B10) from Chironomus thummi thummi (Midge).